The chain runs to 331 residues: 2-hydroxyacid dehydrogenase homolog (331 aa).

Residues 154 to 155 (KI), 232 to 234 (TSR), and Asp-258 contribute to the NAD(+) site. Arg-234 is an active-site residue. Glu-263 is a catalytic residue. The active-site Proton donor is the His-295. 295–298 (HQAF) contacts NAD(+).

Belongs to the D-isomer specific 2-hydroxyacid dehydrogenase family.

The polypeptide is 2-hydroxyacid dehydrogenase homolog (ddh) (Haemophilus influenzae (strain ATCC 51907 / DSM 11121 / KW20 / Rd)).